We begin with the raw amino-acid sequence, 331 residues long: Putative mitochondrial 2-oxoglutarate/malate carrier protein (331 aa).

Solcar repeat units follow at residues 39 to 128, 140 to 231, and 239 to 329; these read VRAA…FMSR, VGFK…AKAQ, and SSKV…LGWL. The next 6 helical transmembrane spans lie at 42-62, 103-121, 148-168, 199-219, 245-265, and 309-329; these read ALPFINGGLSGMVATTVIQPI, GLSAGLLRQAVYTTARIGC, AGLAAGGLAAMIGNPADLALI, GVAALWAGAAPTVVRAMALNF, LSASAIAGFFASFFSLPFDFV, and YVRIAPHAMVTLLVADYLGWL.

The protein belongs to the mitochondrial carrier (TC 2.A.29) family.

The protein localises to the mitochondrion inner membrane. Its function is as follows. Catalyzes the transport of 2-oxoglutarate across the inner mitochondrial membrane. This is Putative mitochondrial 2-oxoglutarate/malate carrier protein (mic-33) from Neurospora crassa (strain ATCC 24698 / 74-OR23-1A / CBS 708.71 / DSM 1257 / FGSC 987).